The sequence spans 401 residues: Phosphoglycerate kinase (401 aa).

Substrate is bound by residues 24–26, arginine 40, 63–66, arginine 122, and arginine 155; these read DFN and HFGR. Residues lysine 206, glycine 297, glutamate 328, and 357 to 360 contribute to the ATP site; that span reads GGDS.

Belongs to the phosphoglycerate kinase family. Monomer.

It localises to the cytoplasm. The enzyme catalyses (2R)-3-phosphoglycerate + ATP = (2R)-3-phospho-glyceroyl phosphate + ADP. The protein operates within carbohydrate degradation; glycolysis; pyruvate from D-glyceraldehyde 3-phosphate: step 2/5. In Prochlorococcus marinus (strain NATL2A), this protein is Phosphoglycerate kinase.